A 500-amino-acid polypeptide reads, in one-letter code: Proline/betaine transporter (500 aa).

The Cytoplasmic portion of the chain corresponds to 1-37 (MLKRKKIKPITLGDVTIIDDGKLRKAITAASLGNAME). The helical transmembrane segment at 38–58 (WFDFGVYGFVAYALGKVFFPG) threads the bilayer. At 59 to 65 (ADPSVQM) the chain is on the periplasmic side. The chain crosses the membrane as a helical span at residues 66–86 (IAALATFSVPFLIRPLGGLFF). At 87 to 97 (GMLGDKYGRQK) the chain is on the cytoplasmic side. Residues 98–118 (ILAITIVIMSISTFCIGLIPS) traverse the membrane as a helical segment. Topologically, residues 119–121 (YAT) are periplasmic. The chain crosses the membrane as a helical span at residues 122 to 142 (IGIWAPILLLLCKMAQGFSVG). Residues 143–169 (GEYTGASIFVAEYSPDRKRGFMGSWLD) lie on the Cytoplasmic side of the membrane. The chain crosses the membrane as a helical span at residues 170–190 (FGSIAGFVLGAGVVVLISTIV). The Periplasmic portion of the chain corresponds to 191-194 (GEEN). A helical membrane pass occupies residues 195–215 (FLEWGWRIPFFIALPLGIIGL). At 216-260 (YLRHALEETPAFQQHVDKLEQGDREGLQDGPKVSFKEIATKHWRS) the chain is on the cytoplasmic side. A helical membrane pass occupies residues 261–281 (LLSCIGLVIATNVTYYMLLTY). Topologically, residues 282-297 (MPSYLSHNLHYSEDHG) are periplasmic. The chain crosses the membrane as a helical span at residues 298 to 318 (VLIIIAIMIGMLFVQPVMGLL). Residues 319–325 (SDRFGRR) are Cytoplasmic-facing. A helical membrane pass occupies residues 326 to 346 (PFVIMGSIALFALAIPAFILI). Residues 347-350 (NSNV) lie on the Periplasmic side of the membrane. Residues 351 to 371 (IGLIFAGLLMLAVILNCFTGV) traverse the membrane as a helical segment. Over 372–390 (MASTLPAMFPTHIRYSALA) the chain is Cytoplasmic. Residues 391–411 (AAFNISVLIAGLTPTLAAWLV) form a helical membrane-spanning segment. The Periplasmic segment spans residues 412–416 (ESSQD). The helical transmembrane segment at 417–437 (LMMPAYYLMVIAVIGLITGIS) threads the bilayer. Over 438 to 500 (MKETANRPLK…LVQQHPRIDE (63 aa)) the chain is Cytoplasmic. Residues 453–498 (ASDIQEAKEILGEHYDNIEQKIDDIDQEIAELQVKRSRLVQQHPRI) adopt a coiled-coil conformation.

This sequence belongs to the major facilitator superfamily. Metabolite:H+ Symporter (MHS) family (TC 2.A.1.6) family.

It is found in the cell inner membrane. In terms of biological role, proton symporter that senses osmotic shifts and responds by importing osmolytes such as proline, glycine betaine, stachydrine, pipecolic acid, ectoine and taurine. It is both an osmosensor and an osmoregulator which is available to participate early in the bacterial osmoregulatory response. This chain is Proline/betaine transporter (proP), found in Salmonella typhimurium (strain LT2 / SGSC1412 / ATCC 700720).